Consider the following 179-residue polypeptide: MNTLLAVLMLAVAAQARPDAAGHVNIAEAVQQLNHTIVNAAHELHETLGLPTPDEALNLLTEQANAFKTKIAEVTTSLKQEAEKHQGSVAEQLNRFARNLNNSIHDAATSAQPADQLNSLQSALTNVGHQWQTSQPRPSVAQEAWAPVQSALQEAAEKTKEAAANLQNSIQSAVQKPAN.

The signal sequence occupies residues 1–16; that stretch reads MNTLLAVLMLAVAAQA. Repeats lie at residues 30 to 40, 41 to 52, 53 to 60, 61 to 78, 79 to 89, 90 to 99, 100 to 113, 114 to 127, 128 to 140, 141 to 151, 152 to 165, and 166 to 179; these read VQQLNHTIVNA, AHELHETLGLPT, PDEALNLL, TEQANAFKTKIAEVTTSL, KQEAEKHQGSV, AEQLNRFARN, LNNSIHDAATSAQP, ADQLNSLQSALTNV, GHQWQTSQPRPSV, AQEAWAPVQSA, LQEAAEKTKEAAAN, and LQNSIQSAVQKPAN. Asparagine 34 carries an N-linked (GlcNAc...) asparagine glycan. Residue asparagine 101 is glycosylated (N-linked (GlcNAc...) asparagine). Residues 152–179 are disordered; that stretch reads LQEAAEKTKEAAANLQNSIQSAVQKPAN. Residues 165–179 are compositionally biased toward polar residues; it reads NLQNSIQSAVQKPAN.

Belongs to the insect apolipophorin-3 family. Equilibrium between a soluble monomer and a bound lipoprotein form. Apolipophorin-3 associates with lipophorin during lipid loading until each particle contains 14 molecules of apolipophorin-3 in L.migratoria (5 molecules of apolipophorin-3a and 9 of apolipophorin-3b). In terms of tissue distribution, hemolymph.

The protein localises to the secreted. Functionally, assists in the loading of diacylglycerol, generated from triacylglycerol stores in the fat body through the action of adipokinetic hormone, into lipophorin, the hemolymph lipoprotein. It increases the lipid carrying capacity of lipophorin by covering the expanding hydrophobic surface resulting from diacylglycerol uptake. It thus plays a critical role in the transport of lipids during flight in several species of insects. This is Apolipophorin-3b from Locusta migratoria (Migratory locust).